The primary structure comprises 366 residues: Carbamoyl phosphate synthase small chain (366 aa).

The tract at residues 1–171 (MLEKRYLVLE…KTPYVSTGSD (171 aa)) is CPSase. The L-glutamine site is built by S47, G221, and G223. A Glutamine amidotransferase type-1 domain is found at 173-360 (SVVLLDFGKK…IAMMKDFKEK (188 aa)). The active-site Nucleophile is C248. Residues L249, Q252, N290, G292, and Y293 each contribute to the L-glutamine site. Active-site residues include H333 and E335.

Belongs to the CarA family. As to quaternary structure, composed of two chains; the small (or glutamine) chain promotes the hydrolysis of glutamine to ammonia, which is used by the large (or ammonia) chain to synthesize carbamoyl phosphate. Tetramer of heterodimers (alpha,beta)4.

The enzyme catalyses hydrogencarbonate + L-glutamine + 2 ATP + H2O = carbamoyl phosphate + L-glutamate + 2 ADP + phosphate + 2 H(+). It catalyses the reaction L-glutamine + H2O = L-glutamate + NH4(+). It participates in amino-acid biosynthesis; L-arginine biosynthesis; carbamoyl phosphate from bicarbonate: step 1/1. It functions in the pathway pyrimidine metabolism; UMP biosynthesis via de novo pathway; (S)-dihydroorotate from bicarbonate: step 1/3. Small subunit of the glutamine-dependent carbamoyl phosphate synthetase (CPSase). CPSase catalyzes the formation of carbamoyl phosphate from the ammonia moiety of glutamine, carbonate, and phosphate donated by ATP, constituting the first step of 2 biosynthetic pathways, one leading to arginine and/or urea and the other to pyrimidine nucleotides. The small subunit (glutamine amidotransferase) binds and cleaves glutamine to supply the large subunit with the substrate ammonia. In Staphylococcus epidermidis (strain ATCC 12228 / FDA PCI 1200), this protein is Carbamoyl phosphate synthase small chain.